A 355-amino-acid chain; its full sequence is CRAL-TRIO domain-containing protein C365.01 (355 aa).

The CRAL-TRIO domain occupies 93 to 260 (ENGLNQNFVK…SMHGQFDETK (168 aa)).

This is CRAL-TRIO domain-containing protein C365.01 from Schizosaccharomyces pombe (strain 972 / ATCC 24843) (Fission yeast).